The primary structure comprises 247 residues: MSNLLLALNIDHIATVRNARGTQYPDPVYAAYIAEQSGIDGITVHLREDRRHITDRDVKLLREIVQTTMNLEMAATDEMVMIACQLKPHYCCLVPERRRELTTEGGLDLIYQIDKMQNIVLKLSDAGIRVSLFIDPDIEQIDASYKIGVRCIELNTGKYAESKNKEDRILEYRRIEKSIKHALSYGLMINAGHGLNYDNVKFIAMLSQIRELNIGHAIVSRAVFCGLPKAIKDMKELLKEFRKKDDQ.

Residue Asn-9 participates in 3-amino-2-oxopropyl phosphate binding. 1-deoxy-D-xylulose 5-phosphate is bound at residue 11-12 (DH). Arg-20 contributes to the 3-amino-2-oxopropyl phosphate binding site. The active-site Proton acceptor is His-45. 2 residues coordinate 1-deoxy-D-xylulose 5-phosphate: Arg-47 and His-52. Catalysis depends on Glu-72, which acts as the Proton acceptor. Thr-102 contributes to the 1-deoxy-D-xylulose 5-phosphate binding site. The active-site Proton donor is the His-193. 3-amino-2-oxopropyl phosphate is bound by residues Gly-194 and 215 to 216 (GH).

It belongs to the PNP synthase family. In terms of assembly, homooctamer; tetramer of dimers.

The protein resides in the cytoplasm. The enzyme catalyses 3-amino-2-oxopropyl phosphate + 1-deoxy-D-xylulose 5-phosphate = pyridoxine 5'-phosphate + phosphate + 2 H2O + H(+). It participates in cofactor biosynthesis; pyridoxine 5'-phosphate biosynthesis; pyridoxine 5'-phosphate from D-erythrose 4-phosphate: step 5/5. In terms of biological role, catalyzes the complicated ring closure reaction between the two acyclic compounds 1-deoxy-D-xylulose-5-phosphate (DXP) and 3-amino-2-oxopropyl phosphate (1-amino-acetone-3-phosphate or AAP) to form pyridoxine 5'-phosphate (PNP) and inorganic phosphate. This is Pyridoxine 5'-phosphate synthase from Blochmanniella floridana.